The primary structure comprises 604 residues: M-phase inducer phosphatase cdc-25.1 (604 aa).

Disordered regions lie at residues 33–67 (PKTL…DVDF) and 127–188 (EKRV…PFGD). Residues 44 to 54 (RDSGVSMTSCS) show a composition bias toward polar residues. A compositionally biased stretch (basic and acidic residues) spans 127 to 138 (EKRVMSERPTDN). The region spanning 305–413 (FDKKYIIVDC…LWSTAECRQI (109 aa)) is the Rhodanese domain. Disordered regions lie at residues 443–464 (ASLK…CTRS) and 562–588 (DFPD…GGHQ).

Belongs to the MPI phosphatase family.

The enzyme catalyses O-phospho-L-tyrosyl-[protein] + H2O = L-tyrosyl-[protein] + phosphate. The protein is M-phase inducer phosphatase cdc-25.1 (cdc-25.1) of Caenorhabditis elegans.